Here is a 915-residue protein sequence, read N- to C-terminus: Kinesin-like protein KIN-10A (915 aa).

Residues Met1–Pro16 show a composition bias toward pro residues. Disordered regions lie at residues Met1–Ala28 and His34–Thr53. The Kinesin motor domain maps to Pro56 to Ile391. Gly137–Ser144 contacts ATP. A coiled-coil region spans residues Asn426–Lys517. The segment at Pro676–Ala718 is disordered.

This sequence belongs to the TRAFAC class myosin-kinesin ATPase superfamily. Kinesin family. KIN-10 subfamily.

This Oryza sativa subsp. japonica (Rice) protein is Kinesin-like protein KIN-10A.